A 183-amino-acid polypeptide reads, in one-letter code: Putative 3-methyladenine DNA glycosylase (183 aa).

It belongs to the DNA glycosylase MPG family.

The polypeptide is Putative 3-methyladenine DNA glycosylase (Legionella pneumophila subsp. pneumophila (strain Philadelphia 1 / ATCC 33152 / DSM 7513)).